The primary structure comprises 616 residues: Chaperone protein HscA (616 aa).

The protein belongs to the heat shock protein 70 family.

In terms of biological role, chaperone involved in the maturation of iron-sulfur cluster-containing proteins. Has a low intrinsic ATPase activity which is markedly stimulated by HscB. Involved in the maturation of IscU. The sequence is that of Chaperone protein HscA from Salmonella heidelberg (strain SL476).